The following is a 402-amino-acid chain: Renin (402 aa).

The signal sequence occupies residues 1-26; that stretch reads MGGRRMPLWALLLLWTSCSFSLPTDT. Residues 27-64 constitute a propeptide, activation peptide; that stretch reads ASFGRILLKKMPSVREILEERGVDMTRISAEWGEFIKK. A glycan (N-linked (GlcNAc...) asparagine) is linked at asparagine 69. A Peptidase A1 domain is found at 84-399; it reads YYGEIGIGTP…DRHNNRIGFA (316 aa). Aspartate 102 is an active-site residue. Residues cysteine 115 and cysteine 122 are joined by a disulfide bond. N-linked (GlcNAc...) asparagine glycosylation is present at asparagine 139. Cysteine 278 and cysteine 282 are joined by a disulfide. Residue aspartate 287 is part of the active site. The N-linked (GlcNAc...) asparagine glycan is linked to asparagine 320. An intrachain disulfide couples cysteine 321 to cysteine 358.

Belongs to the peptidase A1 family. In terms of assembly, interacts with ATP6AP2.

It localises to the secreted. Its subcellular location is the membrane. It carries out the reaction Cleavage of Leu-|-Xaa bond in angiotensinogen to generate angiotensin I.. Its activity is regulated as follows. Interaction with ATP6AP2 results in a 5-fold increased efficiency in angiotensinogen processing. Renin is a highly specific endopeptidase, whose only known function is to generate angiotensin I from angiotensinogen in the plasma, initiating a cascade of reactions that produce an elevation of blood pressure and increased sodium retention by the kidney. The protein is Renin (Ren1) of Rattus norvegicus (Rat).